The chain runs to 483 residues: UDP-N-acetylmuramoyl-L-alanyl-D-glutamate--2,6-diaminopimelate ligase (483 aa).

Ser30 is a UDP-N-acetyl-alpha-D-muramoyl-L-alanyl-D-glutamate binding site. 109 to 115 (GTNGKTT) is an ATP binding site. UDP-N-acetyl-alpha-D-muramoyl-L-alanyl-D-glutamate is bound by residues 151-152 (TT), Ser178, and Arg186. Residue Lys218 is modified to N6-carboxylysine. Meso-2,6-diaminopimelate-binding positions include Arg380, 403–406 (DNPR), Gly453, and Glu457. Positions 403 to 406 (DNPR) match the Meso-diaminopimelate recognition motif motif.

It belongs to the MurCDEF family. MurE subfamily. Requires Mg(2+) as cofactor. Post-translationally, carboxylation is probably crucial for Mg(2+) binding and, consequently, for the gamma-phosphate positioning of ATP.

The protein localises to the cytoplasm. It catalyses the reaction UDP-N-acetyl-alpha-D-muramoyl-L-alanyl-D-glutamate + meso-2,6-diaminopimelate + ATP = UDP-N-acetyl-alpha-D-muramoyl-L-alanyl-gamma-D-glutamyl-meso-2,6-diaminopimelate + ADP + phosphate + H(+). Its pathway is cell wall biogenesis; peptidoglycan biosynthesis. Catalyzes the addition of meso-diaminopimelic acid to the nucleotide precursor UDP-N-acetylmuramoyl-L-alanyl-D-glutamate (UMAG) in the biosynthesis of bacterial cell-wall peptidoglycan. In Chlamydia muridarum (strain MoPn / Nigg), this protein is UDP-N-acetylmuramoyl-L-alanyl-D-glutamate--2,6-diaminopimelate ligase.